Here is a 261-residue protein sequence, read N- to C-terminus: Cytochrome c oxidase subunit 3 (261 aa).

The Mitochondrial matrix segment spans residues 1-15 (MTHQLHAYHMVKPSP). Residues 16–34 (WPLTGALSAFLLTSGLIMW) form a helical membrane-spanning segment. The Mitochondrial intermembrane portion of the chain corresponds to 35–40 (FHFYST). The helical transmembrane segment at 41–66 (ALLTLGLLTNVLTMYQWWRDIIREST) threads the bilayer. The Mitochondrial matrix portion of the chain corresponds to 67 to 72 (YQGHHT). Residues 73–105 (TPVQKSLRYGMTLFIISEVFFFAGFFWAFYHSS) form a helical membrane-spanning segment. Residues 106-128 (LAPTPRLGCHWPPTGITPLNPLE) are Mitochondrial intermembrane-facing. Residues 129–152 (VPLLNTSVLLASGVTITWAHHSLM) form a helical membrane-spanning segment. The Mitochondrial matrix portion of the chain corresponds to 153-155 (NGN). The chain crosses the membrane as a helical span at residues 156–183 (RKQTIQALLITILLGTYFTLVQISEYFE). The Mitochondrial intermembrane segment spans residues 184 to 190 (APFTISD). The helical transmembrane segment at 191–223 (GIYGSTFFVATGFHGLHVIIGSTFLLICLIRQL) threads the bilayer. Over 224–232 (FYHFTPSHH) the chain is Mitochondrial matrix. The chain crosses the membrane as a helical span at residues 233–256 (FGFEAAAWYWHFVDVIWLFLYISI). Residues 257–261 (YWWGS) are Mitochondrial intermembrane-facing.

It belongs to the cytochrome c oxidase subunit 3 family. In terms of assembly, component of the cytochrome c oxidase (complex IV, CIV), a multisubunit enzyme composed of 14 subunits. The complex is composed of a catalytic core of 3 subunits MT-CO1, MT-CO2 and MT-CO3, encoded in the mitochondrial DNA, and 11 supernumerary subunits COX4I, COX5A, COX5B, COX6A, COX6B, COX6C, COX7A, COX7B, COX7C, COX8 and NDUFA4, which are encoded in the nuclear genome. The complex exists as a monomer or a dimer and forms supercomplexes (SCs) in the inner mitochondrial membrane with NADH-ubiquinone oxidoreductase (complex I, CI) and ubiquinol-cytochrome c oxidoreductase (cytochrome b-c1 complex, complex III, CIII), resulting in different assemblies (supercomplex SCI(1)III(2)IV(1) and megacomplex MCI(2)III(2)IV(2)).

Its subcellular location is the mitochondrion inner membrane. It carries out the reaction 4 Fe(II)-[cytochrome c] + O2 + 8 H(+)(in) = 4 Fe(III)-[cytochrome c] + 2 H2O + 4 H(+)(out). In terms of biological role, component of the cytochrome c oxidase, the last enzyme in the mitochondrial electron transport chain which drives oxidative phosphorylation. The respiratory chain contains 3 multisubunit complexes succinate dehydrogenase (complex II, CII), ubiquinol-cytochrome c oxidoreductase (cytochrome b-c1 complex, complex III, CIII) and cytochrome c oxidase (complex IV, CIV), that cooperate to transfer electrons derived from NADH and succinate to molecular oxygen, creating an electrochemical gradient over the inner membrane that drives transmembrane transport and the ATP synthase. Cytochrome c oxidase is the component of the respiratory chain that catalyzes the reduction of oxygen to water. Electrons originating from reduced cytochrome c in the intermembrane space (IMS) are transferred via the dinuclear copper A center (CU(A)) of subunit 2 and heme A of subunit 1 to the active site in subunit 1, a binuclear center (BNC) formed by heme A3 and copper B (CU(B)). The BNC reduces molecular oxygen to 2 water molecules using 4 electrons from cytochrome c in the IMS and 4 protons from the mitochondrial matrix. The chain is Cytochrome c oxidase subunit 3 (MT-CO3) from Papio hamadryas (Hamadryas baboon).